The following is a 515-amino-acid chain: uncharacterized protein (515 aa).

A run of 3 helical transmembrane segments spans residues 1–21 (MSFV…LAGI), 165–185 (IGGP…GLLF), and 199–219 (GPVG…GLFG). The PE domain occupies 1-93 (MSFVVAAPEV…AGAYAGAEAA (93 aa)). Residues 349-360 (GGTLIGNGGDGG) show a composition bias toward gly residues. Disordered stretches follow at residues 349-368 (GGTL…TDGF) and 463-515 (GVSG…SPGG).

Belongs to the mycobacterial PE family. PGRS subfamily.

The protein resides in the cell membrane. This is an uncharacterized protein from Mycobacterium tuberculosis (strain CDC 1551 / Oshkosh).